The chain runs to 365 residues: tRNA/tmRNA (uracil-C(5))-methyltransferase (365 aa).

Residues Gln-188, Tyr-216, Asn-221, Glu-237, and Asp-297 each coordinate S-adenosyl-L-methionine. The Nucleophile role is filled by Cys-322. The active-site Proton acceptor is the Glu-356.

Belongs to the class I-like SAM-binding methyltransferase superfamily. RNA M5U methyltransferase family. TrmA subfamily.

The enzyme catalyses uridine(54) in tRNA + S-adenosyl-L-methionine = 5-methyluridine(54) in tRNA + S-adenosyl-L-homocysteine + H(+). It catalyses the reaction uridine(341) in tmRNA + S-adenosyl-L-methionine = 5-methyluridine(341) in tmRNA + S-adenosyl-L-homocysteine + H(+). In terms of biological role, dual-specificity methyltransferase that catalyzes the formation of 5-methyluridine at position 54 (m5U54) in all tRNAs, and that of position 341 (m5U341) in tmRNA (transfer-mRNA). This chain is tRNA/tmRNA (uracil-C(5))-methyltransferase, found in Aggregatibacter aphrophilus (strain NJ8700) (Haemophilus aphrophilus).